Here is a 181-residue protein sequence, read N- to C-terminus: Large ribosomal subunit protein uL6 (181 aa).

It belongs to the universal ribosomal protein uL6 family. As to quaternary structure, part of the 50S ribosomal subunit.

In terms of biological role, this protein binds to the 23S rRNA, and is important in its secondary structure. It is located near the subunit interface in the base of the L7/L12 stalk, and near the tRNA binding site of the peptidyltransferase center. This is Large ribosomal subunit protein uL6 from Saccharolobus solfataricus (strain ATCC 35092 / DSM 1617 / JCM 11322 / P2) (Sulfolobus solfataricus).